We begin with the raw amino-acid sequence, 73 residues long: uncharacterized protein (73 aa).

Residues 1-32 form a disordered region; the sequence is MFLSSAVRKDSNGVRHLPSVQRWTPGSPPTRA.

This is an uncharacterized protein from Frog virus 3 (isolate Goorha) (FV-3).